A 134-amino-acid polypeptide reads, in one-letter code: Histone H2A (134 aa).

The span at 1–10 shows a compositional bias: gly residues; the sequence is MTGGKSGGKA. Positions 1–24 are disordered; it reads MTGGKSGGKASGSKNAQSRSSKAG. N6-acetyllysine is present on residues Lys5 and Lys9. Gln106 bears the N5-methylglutamine mark. Positions 115–134 are disordered; sequence QNLLPKKTPKSGKGPGSQEL. A Phosphoserine modification is found at Ser131. Positions 131–132 match the [ST]-Q motif motif; it reads SQ.

The protein belongs to the histone H2A family. As to quaternary structure, the nucleosome is a histone octamer containing two molecules each of H2A, H2B, H3 and H4 assembled in one H3-H4 heterotetramer and two H2A-H2B heterodimers. The octamer wraps approximately 147 bp of DNA. Phosphorylated to form H2AS128ph (gamma-H2A) in response to DNA double-strand breaks (DSBs) generated by exogenous genotoxic agents and by stalled replication forks. Phosphorylation is dependent on the DNA damage checkpoint kinases mec1/ATR and tel1/ATM, spreads on either side of a detected DSB site and may mark the surrounding chromatin for recruitment of proteins required for DNA damage signaling and repair. Gamma-H2A is removed from the DNA prior to the strand invasion-primer extension step of the repair process and subsequently dephosphorylated. Dephosphorylation is necessary for efficient recovery from the DNA damage checkpoint. Post-translationally, acetylated by esa1 to form H2AK4ac and H2AK7ac.

Its subcellular location is the nucleus. It is found in the chromosome. Functionally, core component of nucleosome which plays a central role in DNA double strand break (DSB) repair. Nucleosomes wrap and compact DNA into chromatin, limiting DNA accessibility to the cellular machineries which require DNA as a template. Histones thereby play a central role in transcription regulation, DNA repair, DNA replication and chromosomal stability. DNA accessibility is regulated via a complex set of post-translational modifications of histones, also called histone code, and nucleosome remodeling. In Aspergillus niger (strain ATCC MYA-4892 / CBS 513.88 / FGSC A1513), this protein is Histone H2A (httA).